The chain runs to 302 residues: tRNA pseudouridine synthase B (302 aa).

The active-site Nucleophile is Asp-38.

This sequence belongs to the pseudouridine synthase TruB family. Type 1 subfamily.

It carries out the reaction uridine(55) in tRNA = pseudouridine(55) in tRNA. In terms of biological role, responsible for synthesis of pseudouridine from uracil-55 in the psi GC loop of transfer RNAs. The protein is tRNA pseudouridine synthase B of Ligilactobacillus salivarius (strain UCC118) (Lactobacillus salivarius).